A 693-amino-acid chain; its full sequence is Phenoloxidase subunit 2 (693 aa).

A propeptide spanning residues 1–51 (MADVFESLELLFDRPNEPLITPKGENNSVFQLTEQFLTEDYANNGIELNNR) is cleaved from the precursor. N-linked (GlcNAc...) asparagine glycosylation is found at N26 and N64. Residues H213, H217, and H243 each contribute to the Cu cation site. E351 serves as the catalytic Proton acceptor. H366, H370, and H406 together coordinate Cu cation. N-linked (GlcNAc...) asparagine glycosylation is found at N462 and N494. Intrachain disulfides connect C583–C627 and C585–C634. A glycan (N-linked (GlcNAc...) asparagine) is linked at N680.

As to quaternary structure, heterodimer. Cu(2+) serves as cofactor. The N-terminus is blocked. Synthesized by hemocytes and released into the hemolymph plasma.

The protein resides in the secreted. The catalysed reaction is 2 L-dopa + O2 = 2 L-dopaquinone + 2 H2O. It carries out the reaction L-tyrosine + O2 = L-dopaquinone + H2O. Functionally, this is a copper-containing oxidase that functions in the formation of pigments such as melanins and other polyphenolic compounds. Catalyzes the rate-limiting conversions of tyrosine to DOPA, DOPA to DOPA-quinone and possibly 5,6 dihydroxyindole to indole-5'6 quinone. The chain is Phenoloxidase subunit 2 from Bombyx mori (Silk moth).